Consider the following 357-residue polypeptide: Histidine biosynthesis bifunctional protein HisB (357 aa).

The histidinol-phosphatase stretch occupies residues 1 to 168 (MTPILFIDRD…GIAHALADAP (168 aa)). Asp-8 functions as the Nucleophile in the catalytic mechanism. Residues Asp-8, Asp-10, and Asp-128 each coordinate Mg(2+). The active-site Proton donor is the Asp-10. The interval 169 to 357 (RTAVVQRDTK…TALPSTKGAL (189 aa)) is imidazoleglycerol-phosphate dehydratase.

This sequence in the N-terminal section; belongs to the histidinol-phosphatase family. It in the C-terminal section; belongs to the imidazoleglycerol-phosphate dehydratase family. Mg(2+) serves as cofactor.

It is found in the cytoplasm. The enzyme catalyses D-erythro-1-(imidazol-4-yl)glycerol 3-phosphate = 3-(imidazol-4-yl)-2-oxopropyl phosphate + H2O. It carries out the reaction L-histidinol phosphate + H2O = L-histidinol + phosphate. It participates in amino-acid biosynthesis; L-histidine biosynthesis; L-histidine from 5-phospho-alpha-D-ribose 1-diphosphate: step 6/9. It functions in the pathway amino-acid biosynthesis; L-histidine biosynthesis; L-histidine from 5-phospho-alpha-D-ribose 1-diphosphate: step 8/9. This chain is Histidine biosynthesis bifunctional protein HisB, found in Stenotrophomonas maltophilia (strain K279a).